Consider the following 258-residue polypeptide: Isoprenyl transferase 2 (258 aa).

The segment covering 1 to 18 (MNFPPIHPSTPKMTPPDL) has biased composition (pro residues). Residues 1–21 (MNFPPIHPSTPKMTPPDLDPQ) form a disordered region. The active site involves Asp32. Asp32 contributes to the Mg(2+) binding site. Substrate-binding positions include 33–36 (GNGR), Trp37, Arg45, His49, and 77–79 (STE). Catalysis depends on Asn80, which acts as the Proton acceptor. Substrate is bound by residues Trp81, Arg83, Arg200, and 206-208 (RLS). Glu219 is a Mg(2+) binding site.

Belongs to the UPP synthase family. In terms of assembly, homodimer. Mg(2+) is required as a cofactor.

Its function is as follows. Catalyzes the condensation of isopentenyl diphosphate (IPP) with allylic pyrophosphates generating different type of terpenoids. This chain is Isoprenyl transferase 2, found in Nostoc sp. (strain PCC 7120 / SAG 25.82 / UTEX 2576).